Consider the following 356-residue polypeptide: Uroporphyrinogen decarboxylase (356 aa).

Substrate contacts are provided by residues 23 to 27 (RQAGR), aspartate 72, tyrosine 148, serine 203, and histidine 321.

This sequence belongs to the uroporphyrinogen decarboxylase family. Homodimer.

Its subcellular location is the cytoplasm. It catalyses the reaction uroporphyrinogen III + 4 H(+) = coproporphyrinogen III + 4 CO2. Its pathway is porphyrin-containing compound metabolism; protoporphyrin-IX biosynthesis; coproporphyrinogen-III from 5-aminolevulinate: step 4/4. Functionally, catalyzes the decarboxylation of four acetate groups of uroporphyrinogen-III to yield coproporphyrinogen-III. The protein is Uroporphyrinogen decarboxylase of Chloroflexus aggregans (strain MD-66 / DSM 9485).